Here is a 623-residue protein sequence, read N- to C-terminus: Chaperone protein DnaK (623 aa).

T174 is subject to Phosphothreonine; by autocatalysis. 2 disordered regions span residues I470 to V504 and G578 to K623. Residues E481–V504 show a composition bias toward basic and acidic residues. Low complexity predominate over residues G578–S604. The segment covering G614–K623 has biased composition (basic and acidic residues).

The protein belongs to the heat shock protein 70 family.

Functionally, acts as a chaperone. The sequence is that of Chaperone protein DnaK from Lactobacillus gasseri (strain ATCC 33323 / DSM 20243 / BCRC 14619 / CIP 102991 / JCM 1131 / KCTC 3163 / NCIMB 11718 / NCTC 13722 / AM63).